Consider the following 428-residue polypeptide: C4-dicarboxylate transport protein (428 aa).

A run of 9 helical transmembrane segments spans residues 4 to 24 (SLFK…ILLG), 44 to 64 (LIKM…IAGM), 76 to 96 (VALL…LIIV), 142 to 162 (IGAF…MFGF), 184 to 204 (VIFG…FGAM), 222 to 242 (LIVC…GSIA), 289 to 309 (VVGL…SIYL), 326 to 346 (IFHQ…AAGV), and 352 to 372 (IVLA…LALI).

It belongs to the dicarboxylate/amino acid:cation symporter (DAACS) (TC 2.A.23) family.

It localises to the cell inner membrane. Responsible for the transport of dicarboxylates such as succinate, fumarate, and malate from the periplasm across the membrane. This chain is C4-dicarboxylate transport protein, found in Citrobacter koseri (strain ATCC BAA-895 / CDC 4225-83 / SGSC4696).